The chain runs to 272 residues: Flagellin (272 aa).

It belongs to the bacterial flagellin family.

It is found in the secreted. Its subcellular location is the bacterial flagellum. Its function is as follows. Flagellin is the subunit protein which polymerizes to form the filaments of bacterial flagella. This Halalkalibacterium halodurans (strain ATCC BAA-125 / DSM 18197 / FERM 7344 / JCM 9153 / C-125) (Bacillus halodurans) protein is Flagellin (hag).